The sequence spans 368 residues: Decarboxylase yanB (368 aa).

Positions 7, 9, and 159 each coordinate Zn(2+). The N-linked (GlcNAc...) asparagine glycan is linked to Asn-169. Asp-283 is a Zn(2+) binding site. The chain crosses the membrane as a helical span at residues 339–359 (WGAFSACLLLPVGLSALYSVL).

Belongs to the metallo-dependent hydrolases superfamily. ACMSD family.

It is found in the membrane. The enzyme catalyses 6-methylsalicylate + H(+) = 3-methylphenol + CO2. It functions in the pathway secondary metabolite biosynthesis; terpenoid biosynthesis. In terms of biological role, decarboxylase; part of the gene cluster that mediates the biosynthesis of yanuthone D, a fungal isoprenoid epoxycyclohexenone that acts as an antibiotic against fungi and bacteria. The first step of the pathway is the synthesis of 6-methylsalicylic acid (6-MSA) by the polyketide synthase yanA. 6-MSA is then converted to m-cresol by the decarboxylase yanB. The cytochrome P450 monooxygenase yanC then catalyzes the oxidation of m-cresol to toluquinol. Epoxidation of toluquinol is then performed by the short chain dehydrogenase yanD, with the help of yanE, and a further prenylation by yanG leads to 7-deacetoxyyanuthone A. The next step is the hydroxylation of C-22 of 7-deacetoxyyanuthone A by the cytochrome P450 monooxygenase yanH to yield 22-deacetylyanuthone A. O-Mevalon transferase yanI then attaches mevalon to the hydroxyl group of 22-deacetylyanuthone A to produce yanuthone E. Finally, the FAD-dependent monooxygenase yanF oxidizes the hydroxyl group at C15 of yanuthone E to form yanuthone D. Furthermore, several branching points in the pathway lead to the production of yanuthones F and G from 7-deacetoxyyanuthone A; yanuthones H and I from 22-deacetylyanuthone A; and yanuthone J from yanuthone E. The sequence is that of Decarboxylase yanB from Aspergillus niger (strain ATCC 1015 / CBS 113.46 / FGSC A1144 / LSHB Ac4 / NCTC 3858a / NRRL 328 / USDA 3528.7).